A 365-amino-acid chain; its full sequence is DNA replication and repair protein RecF (365 aa).

Residue Gly30–Thr37 participates in ATP binding.

It belongs to the RecF family.

It is found in the cytoplasm. In terms of biological role, the RecF protein is involved in DNA metabolism; it is required for DNA replication and normal SOS inducibility. RecF binds preferentially to single-stranded, linear DNA. It also seems to bind ATP. The polypeptide is DNA replication and repair protein RecF (Azotobacter vinelandii (strain DJ / ATCC BAA-1303)).